The following is a 516-amino-acid chain: Chromosomal replication initiator protein DnaA (516 aa).

A domain I, interacts with DnaA modulators region spans residues 1-72 (MSLEHWNLCL…LLSEFAGDDL (72 aa)). Positions 72-179 (LAPALKLAVK…QVEGGINHGA (108 aa)) are domain II. A domain III, AAA+ region region spans residues 180–396 (NLNNSFTFDN…GALKRVIANS (217 aa)). 4 residues coordinate ATP: Gly-224, Gly-226, Lys-227, and Thr-228. The tract at residues 397-516 (HFTGRAITPD…YKQLMRILTT (120 aa)) is domain IV, binds dsDNA.

The protein belongs to the DnaA family. Oligomerizes as a right-handed, spiral filament on DNA at oriC.

Its subcellular location is the cytoplasm. In terms of biological role, plays an essential role in the initiation and regulation of chromosomal replication. ATP-DnaA binds to the origin of replication (oriC) to initiate formation of the DNA replication initiation complex once per cell cycle. Binds the DnaA box (a 9 base pair repeat at the origin) and separates the double-stranded (ds)DNA. Forms a right-handed helical filament on oriC DNA; dsDNA binds to the exterior of the filament while single-stranded (ss)DNA is stabiized in the filament's interior. The ATP-DnaA-oriC complex binds and stabilizes one strand of the AT-rich DNA unwinding element (DUE), permitting loading of DNA polymerase. After initiation quickly degrades to an ADP-DnaA complex that is not apt for DNA replication. Binds acidic phospholipids. In Marinomonas sp. (strain MWYL1), this protein is Chromosomal replication initiator protein DnaA.